A 374-amino-acid chain; its full sequence is Flagellar P-ring protein (374 aa).

Residues methionine 1–alanine 29 form the signal peptide.

It belongs to the FlgI family. As to quaternary structure, the basal body constitutes a major portion of the flagellar organelle and consists of four rings (L,P,S, and M) mounted on a central rod.

The protein resides in the periplasm. It localises to the bacterial flagellum basal body. Functionally, assembles around the rod to form the L-ring and probably protects the motor/basal body from shearing forces during rotation. The protein is Flagellar P-ring protein of Nitrobacter hamburgensis (strain DSM 10229 / NCIMB 13809 / X14).